A 345-amino-acid chain; its full sequence is Dihydroorotase (345 aa).

Residues His13 and His15 each coordinate Zn(2+). Residues 15 to 17 (HLR) and Asn41 contribute to the substrate site. Zn(2+) contacts are provided by Lys99, His136, and His174. At Lys99 the chain carries N6-carboxylysine. His136 provides a ligand contact to substrate. Leu219 is a substrate binding site. Asp247 contacts Zn(2+). Asp247 is an active-site residue. Substrate is bound by residues His251 and Ala263.

Belongs to the metallo-dependent hydrolases superfamily. DHOase family. Class II DHOase subfamily. In terms of assembly, homodimer. Zn(2+) serves as cofactor.

It catalyses the reaction (S)-dihydroorotate + H2O = N-carbamoyl-L-aspartate + H(+). Its pathway is pyrimidine metabolism; UMP biosynthesis via de novo pathway; (S)-dihydroorotate from bicarbonate: step 3/3. In terms of biological role, catalyzes the reversible cyclization of carbamoyl aspartate to dihydroorotate. In Hahella chejuensis (strain KCTC 2396), this protein is Dihydroorotase.